We begin with the raw amino-acid sequence, 210 residues long: Amelogenin, X isoform (210 aa).

The N-terminal stretch at Met1 to Ala16 is a signal peptide. The residue at position 32 (Ser32) is a Phosphoserine. Composition is skewed to low complexity over residues Val109–Pro119 and Pro136–Gln169. The disordered stretch occupies residues Val109–Ser187. Pro residues predominate over residues Pro170–Pro179.

It belongs to the amelogenin family. Interacts with KRT5. Post-translationally, several forms are produced by C-terminal processing. Phosphorylated by FAM20C in vitro.

The protein localises to the secreted. The protein resides in the extracellular space. It localises to the extracellular matrix. Its function is as follows. Plays a role in the biomineralization of teeth. Seems to regulate the formation of crystallites during the secretory stage of tooth enamel development. Thought to play a major role in the structural organization and mineralization of developing enamel. The protein is Amelogenin, X isoform (Amelx) of Mus musculus (Mouse).